Consider the following 222-residue polypeptide: Cytidylate kinase (222 aa).

G10–S18 contributes to the ATP binding site.

It belongs to the cytidylate kinase family. Type 1 subfamily.

It is found in the cytoplasm. It carries out the reaction CMP + ATP = CDP + ADP. The enzyme catalyses dCMP + ATP = dCDP + ADP. This chain is Cytidylate kinase, found in Acholeplasma laidlawii (strain PG-8A).